The sequence spans 313 residues: GTPase Era (313 aa).

Residues 20 to 187 (RSGFVALIGA…MDYLAETLPE (168 aa)) enclose the Era-type G domain. The segment at 28-35 (GATNAGKS) is G1. Residue 28–35 (GATNAGKS) participates in GTP binding. The interval 54–58 (QTTRA) is G2. Residues 75–78 (DTPG) form a G3 region. GTP is bound by residues 75–79 (DTPGI) and 137–140 (NKVD). Positions 137–140 (NKVD) are G4. The interval 166-168 (ISA) is G5. In terms of domain architecture, KH type-2 spans 218–295 (LHQELPYASH…HLFLFVKVRE (78 aa)).

This sequence belongs to the TRAFAC class TrmE-Era-EngA-EngB-Septin-like GTPase superfamily. Era GTPase family. As to quaternary structure, monomer.

Its subcellular location is the cytoplasm. It localises to the cell inner membrane. In terms of biological role, an essential GTPase that binds both GDP and GTP, with rapid nucleotide exchange. Plays a role in 16S rRNA processing and 30S ribosomal subunit biogenesis and possibly also in cell cycle regulation and energy metabolism. The chain is GTPase Era from Rhizobium meliloti (strain 1021) (Ensifer meliloti).